Consider the following 301-residue polypeptide: Pseudouridine-5'-phosphate glycosidase (301 aa).

The active-site Proton donor is the glutamate 25. The substrate site is built by lysine 86 and valine 106. Residue aspartate 138 coordinates Mn(2+). Residue 140–142 (SAD) coordinates substrate. Lysine 159 functions as the Nucleophile in the catalytic mechanism.

It belongs to the pseudouridine-5'-phosphate glycosidase family. In terms of assembly, homotrimer. The cofactor is Mn(2+).

The catalysed reaction is D-ribose 5-phosphate + uracil = psi-UMP + H2O. Functionally, catalyzes the reversible cleavage of pseudouridine 5'-phosphate (PsiMP) to ribose 5-phosphate and uracil. Functions biologically in the cleavage direction, as part of a pseudouridine degradation pathway. This is Pseudouridine-5'-phosphate glycosidase from Geobacillus kaustophilus (strain HTA426).